Reading from the N-terminus, the 88-residue chain is UPF0297 protein SGO_2042 (88 aa).

Belongs to the UPF0297 family.

The sequence is that of UPF0297 protein SGO_2042 from Streptococcus gordonii (strain Challis / ATCC 35105 / BCRC 15272 / CH1 / DL1 / V288).